The chain runs to 277 residues: Large ribosomal subunit protein uL2 (277 aa).

The segment at 222–277 is disordered; it reads GVAMNPVDHPHGGGEGRTSGGRHPVSPWGKPTKGKRTRSNKATDKFIMRTRHQRKK.

The protein belongs to the universal ribosomal protein uL2 family. As to quaternary structure, part of the 50S ribosomal subunit. Forms a bridge to the 30S subunit in the 70S ribosome.

Its function is as follows. One of the primary rRNA binding proteins. Required for association of the 30S and 50S subunits to form the 70S ribosome, for tRNA binding and peptide bond formation. It has been suggested to have peptidyltransferase activity; this is somewhat controversial. Makes several contacts with the 16S rRNA in the 70S ribosome. This Bartonella henselae (strain ATCC 49882 / DSM 28221 / CCUG 30454 / Houston 1) (Rochalimaea henselae) protein is Large ribosomal subunit protein uL2.